Consider the following 420-residue polypeptide: Heterogeneous nuclear ribonucleoprotein D-like (420 aa).

2 disordered regions span residues 1-83 (MEVP…RRRP) and 96-120 (QRSAAAAAATRTARQHPPADSSVTM). Arginine 25 is subject to Omega-N-methylarginine. The span at 36 to 52 (RQLAPLLPSLAPSSARQ) shows a compositional bias: low complexity. RRM domains lie at 148 to 230 (GKMF…KGKE) and 233 to 312 (KKVF…QPKE). N6-methyllysine is present on lysine 161. Residue lysine 209 forms a Glycyl lysine isopeptide (Lys-Gly) (interchain with G-Cter in SUMO2) linkage. Lysine 216 carries the post-translational modification N6-acetyllysine. Serine 241 is subject to Phosphoserine. Disordered regions lie at residues 313-348 (VYRQQQQQQKGGRGAAAGGRGGTRGRGRGQGQNWNQ) and 398-420 (GQQSTYGKASRGGGNHQNNYQPY). A compositionally biased stretch (gly residues) spans 323-342 (GGRGAAAGGRGGTRGRGRGQ). A necessary for interaction with TNPO1 region spans residues 342–420 (QGQNWNQGFN…GNHQNNYQPY (79 aa)). The interval 396-420 (YSGQQSTYGKASRGGGNHQNNYQPY) is necessary for its nuclear import and export. Position 408 is a dimethylated arginine; alternate (arginine 408). Arginine 408 bears the Omega-N-methylarginine; alternate mark.

Interacts with ZNF148. Interacts with TNPO1. In terms of processing, dimethylation of Arg-408 is probably of the asymmetric type. As to expression, expressed in heart, brain, placenta, lung, liver, skeletal muscle, kidney, pancreas, spleen, thymus, prostate, testis, ovary, small intestine, colon and leukocytes. Expressed in myeloid leukemia, gastric adenocarcinoma, cervical carcinoma, hepatoma, fibrosarcoma, colon adenocarcinoma, epidermoid carcinoma, osteosarcoma and urinary bladder carcinoma cells.

It localises to the nucleus. Its subcellular location is the cytoplasm. Its function is as follows. Acts as a transcriptional regulator. Promotes transcription repression. Promotes transcription activation in differentiated myotubes. Binds to double- and single-stranded DNA sequences. Binds to the transcription suppressor CATR sequence of the COX5B promoter. Binds with high affinity to RNA molecules that contain AU-rich elements (AREs) found within the 3'-UTR of many proto-oncogenes and cytokine mRNAs. Binds both to nuclear and cytoplasmic poly(A) mRNAs. Binds to poly(G) and poly(A), but not to poly(U) or poly(C) RNA homopolymers. Binds to the 5'-ACUAGC-3' RNA consensus sequence. The protein is Heterogeneous nuclear ribonucleoprotein D-like (HNRNPDL) of Homo sapiens (Human).